We begin with the raw amino-acid sequence, 239 residues long: 7-cyano-7-deazaguanine synthase (239 aa).

8–18 serves as a coordination point for ATP; it reads FSGGLDSTASL. Zn(2+) is bound by residues C194, C209, C212, and C215.

It belongs to the QueC family.

The catalysed reaction is 7-carboxy-7-deazaguanine + NH4(+) + ATP = 7-cyano-7-deazaguanine + ADP + phosphate + H2O + H(+). It functions in the pathway purine metabolism; 7-cyano-7-deazaguanine biosynthesis. Catalyzes the ATP-dependent conversion of 7-carboxy-7-deazaguanine (CDG) to 7-cyano-7-deazaguanine (preQ(0)). The chain is 7-cyano-7-deazaguanine synthase from Pyrococcus abyssi (strain GE5 / Orsay).